The chain runs to 456 residues: GTPase Der (456 aa).

EngA-type G domains are found at residues 2–167 (LKVA…DQFG) and 176–351 (ATFC…AQLK). GTP contacts are provided by residues 8–15 (GKPNVGKS), 55–59 (DTGGL), 118–121 (NKIE), 182–189 (GKPNVGKS), 229–233 (DTAGI), and 294–297 (NKWD). In terms of domain architecture, KH-like spans 352-436 (IKISTSLLND…PITLYFKSKN (85 aa)).

Belongs to the TRAFAC class TrmE-Era-EngA-EngB-Septin-like GTPase superfamily. EngA (Der) GTPase family. Associates with the 50S ribosomal subunit.

Its function is as follows. GTPase that plays an essential role in the late steps of ribosome biogenesis. This chain is GTPase Der, found in Mycoplasmoides gallisepticum (strain R(low / passage 15 / clone 2)) (Mycoplasma gallisepticum).